The chain runs to 579 residues: Cytochrome P450 monooxygenase prx9 (579 aa).

Residues 6–25 (LPLGSFVGTTLLLFILYKLV) form a helical membrane-spanning segment. N-linked (GlcNAc...) asparagine glycosylation is found at Asn194, Asn292, and Asn390. Cys512 is a binding site for heme.

The protein belongs to the cytochrome P450 family. It depends on heme as a cofactor.

Its subcellular location is the membrane. The protein operates within sesquiterpene biosynthesis. Its function is as follows. Cytochrome P450 monooxygenase; part of the gene cluster that mediates the biosynthesis of PR-toxin, a bicyclic sesquiterpene belonging to the eremophilane class and acting as a mycotoxin. The first step of the pathway is catalyzed by the aristolochene synthase which performs the cyclization of trans,trans-farnesyl diphosphate (FPP) to the bicyclic sesquiterpene aristolochene. Following the formation of aristolochene, the non-oxygenated aristolochene is converted to the trioxygenated intermediate eremofortin B, via 7-epi-neopetasone. This conversion appears to involve three enzymes, a hydroxysterol oxidase-like enzyme, the quinone-oxidase prx3 that forms the quinone-type-structure in the bicyclic nucleus of aristolochene with the C8-oxo group and the C-3 hydroxyl group, and the P450 monooxygenase prx9 that introduces the epoxide at the double bond between carbons 1 and 2. No monoxy or dioxy-intermediates have been reported to be released to the broth, so these three early oxidative reactions may be coupled together. Eremofortin B is further oxidized by another P450 monooxygenase, that introduces a second epoxide between carbons 7 and 11 prior to acetylation to eremofortin A by the acetyltransferase prx11. The second epoxidation may be performed by a second P450 monooxygenase. After the acetylation step, eremofortin A is converted to eremofortin C and then to PR-toxin. First the conversion of eremofortin A to eremofortin C proceeds by oxidation of the side chain of the molecule at C-12 and is catalyzed by the short-chain oxidoreductase prx1. The cytochrome P450 monooxygenase prx8 also plays a role in this step. The primary alcohol formed at C-12 is finally oxidized by the short-chain alcohol dehydrogenase prx4 that forms PR-toxin. The protein is Cytochrome P450 monooxygenase prx9 of Penicillium rubens (strain ATCC 28089 / DSM 1075 / NRRL 1951 / Wisconsin 54-1255) (Penicillium chrysogenum).